The following is a 437-amino-acid chain: Serine carboxypeptidase-like 17 (437 aa).

Residues 1-26 (MGKECYYLSWILKFHLLLVLIQLVDS) form the signal peptide. 3 cysteine pairs are disulfide-bonded: cysteine 85-cysteine 327, cysteine 249-cysteine 263, and cysteine 287-cysteine 293. The N-linked (GlcNAc...) asparagine glycan is linked to asparagine 106. Residue serine 181 is part of the active site. Residue aspartate 362 is part of the active site. Asparagine 378 carries an N-linked (GlcNAc...) asparagine glycan. Residue histidine 415 is part of the active site.

Belongs to the peptidase S10 family. Expressed in seedlings and siliques.

It localises to the secreted. Probable carboxypeptidase. The chain is Serine carboxypeptidase-like 17 (SCPL17) from Arabidopsis thaliana (Mouse-ear cress).